We begin with the raw amino-acid sequence, 120 residues long: Peptidyl-tRNA hydrolase (120 aa).

Belongs to the PTH2 family.

The protein resides in the cytoplasm. It carries out the reaction an N-acyl-L-alpha-aminoacyl-tRNA + H2O = an N-acyl-L-amino acid + a tRNA + H(+). Functionally, the natural substrate for this enzyme may be peptidyl-tRNAs which drop off the ribosome during protein synthesis. In Saccharolobus islandicus (strain Y.N.15.51 / Yellowstone #2) (Sulfolobus islandicus), this protein is Peptidyl-tRNA hydrolase.